The sequence spans 295 residues: Nucleotide-binding protein Sare_3328 (295 aa).

19 to 26 (GVSGGGRS) contributes to the ATP binding site. A GTP-binding site is contributed by 70–73 (DVRS).

This sequence belongs to the RapZ-like family.

Displays ATPase and GTPase activities. This chain is Nucleotide-binding protein Sare_3328, found in Salinispora arenicola (strain CNS-205).